The chain runs to 197 residues: Probable S-adenosylmethionine-dependent methyltransferase MJ0882 (197 aa).

S-adenosyl-L-methionine is bound by residues 63-67 (GCGYG), aspartate 84, and asparagine 129. Residue 129 to 132 (NPPI) participates in substrate binding.

The protein belongs to the methyltransferase superfamily.

Its function is as follows. Probable methyltransferase that uses S-adenosylmethionine as the methyl donor. Binds neither NAD nor NADP in vitro. This is Probable S-adenosylmethionine-dependent methyltransferase MJ0882 from Methanocaldococcus jannaschii (strain ATCC 43067 / DSM 2661 / JAL-1 / JCM 10045 / NBRC 100440) (Methanococcus jannaschii).